A 235-amino-acid polypeptide reads, in one-letter code: Small ribosomal subunit protein eS4 (235 aa).

An S4 RNA-binding domain is found at 37-100 (LPLGIIIRDI…NEAYRMLQDE (64 aa)).

It belongs to the eukaryotic ribosomal protein eS4 family.

This Methanosarcina acetivorans (strain ATCC 35395 / DSM 2834 / JCM 12185 / C2A) protein is Small ribosomal subunit protein eS4.